The primary structure comprises 310 residues: MQKYDIKTFQGMILALQDYWAQQGCTIVQPLDMEVGAGTSHPMTCLRALGPEPMATAYVQPSRRPTDGRYGENPNRLQHYYQFQVALKPSPDNIQELYLGSLEVLGIDPLVHDIRFVEDNWENPTLGAWGLGWEIWLNGMEVTQFTYFQQVGGLECKPVTGEITYGIERLAMYIQEVGSVYDLVWNYGPQGVVTYGDIFHQNEVEQSTYNFEHADVDFLFGFFDQCEKECKELLELEKPLPLPAYERILKAGHAFNLLDARKAISVTERQRYILRIRNLTKSVAEAYYASREALGFPMCRSTKPTATEEK.

Belongs to the class-II aminoacyl-tRNA synthetase family. As to quaternary structure, tetramer of two alpha and two beta subunits.

The protein resides in the cytoplasm. It catalyses the reaction tRNA(Gly) + glycine + ATP = glycyl-tRNA(Gly) + AMP + diphosphate. The polypeptide is Glycine--tRNA ligase alpha subunit (Aliivibrio salmonicida (strain LFI1238) (Vibrio salmonicida (strain LFI1238))).